Reading from the N-terminus, the 306-residue chain is UDP-3-O-acyl-N-acetylglucosamine deacetylase (306 aa).

The Zn(2+) site is built by His79, His238, and Asp242. His265 (proton donor) is an active-site residue.

Belongs to the LpxC family. It depends on Zn(2+) as a cofactor.

The enzyme catalyses a UDP-3-O-[(3R)-3-hydroxyacyl]-N-acetyl-alpha-D-glucosamine + H2O = a UDP-3-O-[(3R)-3-hydroxyacyl]-alpha-D-glucosamine + acetate. It participates in glycolipid biosynthesis; lipid IV(A) biosynthesis; lipid IV(A) from (3R)-3-hydroxytetradecanoyl-[acyl-carrier-protein] and UDP-N-acetyl-alpha-D-glucosamine: step 2/6. Catalyzes the hydrolysis of UDP-3-O-myristoyl-N-acetylglucosamine to form UDP-3-O-myristoylglucosamine and acetate, the committed step in lipid A biosynthesis. This is UDP-3-O-acyl-N-acetylglucosamine deacetylase from Shewanella violacea (strain JCM 10179 / CIP 106290 / LMG 19151 / DSS12).